A 104-amino-acid polypeptide reads, in one-letter code: Putative arsenate reductase (104 aa).

The active site involves Cys-12.

Belongs to the ArsC family.

It catalyses the reaction [glutaredoxin]-dithiol + arsenate + glutathione + H(+) = glutathionyl-S-S-[glutaredoxin] + arsenite + H2O. Functionally, reduction of arsenate [As(V)] to arsenite [As(III)]. This protein expands the substrate specificity of ArsAB pump which can extrude arsenite and antimonite to allow for arsenate pumping and resistance. This Escherichia coli (strain K12) protein is Putative arsenate reductase (yfjU).